We begin with the raw amino-acid sequence, 385 residues long: NifS/IcsS protein homolog (385 aa).

Pyridoxal 5'-phosphate contacts are provided by residues 69–70 (GT), Asn149, Gln178, and 199–201 (SSH). Lys202 is modified (N6-(pyridoxal phosphate)lysine). Thr237 contacts pyridoxal 5'-phosphate. The Cysteine persulfide intermediate role is filled by Cys325. Cys325 serves as a coordination point for [2Fe-2S] cluster.

It belongs to the class-V pyridoxal-phosphate-dependent aminotransferase family. NifS/IscS subfamily. The cofactor is pyridoxal 5'-phosphate.

This chain is NifS/IcsS protein homolog, found in Lactobacillus delbrueckii subsp. bulgaricus (strain ATCC 11842 / DSM 20081 / BCRC 10696 / JCM 1002 / NBRC 13953 / NCIMB 11778 / NCTC 12712 / WDCM 00102 / Lb 14).